The sequence spans 472 residues: Eukaryotic translation initiation factor 2 subunit 3, X-linked (472 aa).

Alanine 2 bears the N-acetylalanine mark. Residue serine 16 is modified to Phosphoserine. The 210-residue stretch at 39 to 248 (QATINIGTIG…IVKKIPVPPR (210 aa)) folds into the tr-type G domain. The interval 48–55 (GHVAHGKS) is G1. A GTP-binding site is contributed by 51–56 (AHGKST). The G2 stretch occupies residues 76-80 (NITIK). The interval 134–137 (DCPG) is G3. GTP-binding positions include 190-193 (NKID) and 225-227 (SAQ). A G4 region spans residues 190-193 (NKID). Residues 225–227 (SAQ) form a G5 region. Positions 457-469 (GQIRRGVTIKPTV) are interacts with Cdc123.

It belongs to the TRAFAC class translation factor GTPase superfamily. Classic translation factor GTPase family. EIF2G subfamily. As to quaternary structure, eukaryotic translation initiation factor 2 eIF2 is a heterotrimeric complex composed of an alpha (EIF2S1), a beta (EIF2S2) and a gamma (EIF2S3) chain. eIF2 is member of the 43S pre-initiation complex (43S PIC). Interacts (via C-terminus) with CDC123; the interaction is direct. Widely expressed. In the brain, high mRNA levels are observed in specific regions, including the habenula, anterodorsal thalamic nucleus, hippocampus, hypothalamus, and cerebellum. Also expressed in the embryonic brain. There is a differential expression between males and females, which is tissue-specific. Females tend to have higher expression levels than males in the brain (cortex, hippocampus and paraventricular nucleus, but not in the habenula), as well as in other tissues. The up-regulation observed in females at the mRNA level may be due to the presence of 2 active copies of the gene.

It is found in the cytoplasm. It localises to the cytosol. It catalyses the reaction GTP + H2O = GDP + phosphate + H(+). Functionally, member of the eIF2 complex that functions in the early steps of protein synthesis by forming a ternary complex with GTP and initiator tRNA. This complex binds to a 40S ribosomal subunit, followed by mRNA binding to form the 43S pre-initiation complex (43S PIC). Junction of the 60S ribosomal subunit to form the 80S initiation complex is preceded by hydrolysis of the GTP bound to eIF2 and release of an eIF2-GDP binary complex. In order for eIF2 to recycle and catalyze another round of initiation, the GDP bound to eIF2 must exchange with GTP by way of a reaction catalyzed by eIF-2B. Along with its paralog on chromosome Y, may contribute to spermatogenesis up to the round spermatid stage. The polypeptide is Eukaryotic translation initiation factor 2 subunit 3, X-linked (Eif2s3x) (Mus musculus (Mouse)).